The chain runs to 164 residues: Lipoprotein signal peptidase (164 aa).

3 consecutive transmembrane segments (helical) span residues 12-32 (WLWL…LILQ), 70-90 (WFFA…MYRL), and 102-122 (ALII…GFVV). Active-site residues include D123 and D141. Residues 137–157 (FNLADTAICVGAALIVLEGFL) form a helical membrane-spanning segment.

The protein belongs to the peptidase A8 family.

It localises to the cell inner membrane. The catalysed reaction is Release of signal peptides from bacterial membrane prolipoproteins. Hydrolyzes -Xaa-Yaa-Zaa-|-(S,diacylglyceryl)Cys-, in which Xaa is hydrophobic (preferably Leu), and Yaa (Ala or Ser) and Zaa (Gly or Ala) have small, neutral side chains.. The protein operates within protein modification; lipoprotein biosynthesis (signal peptide cleavage). Functionally, this protein specifically catalyzes the removal of signal peptides from prolipoproteins. This is Lipoprotein signal peptidase from Shigella boydii serotype 4 (strain Sb227).